Here is a 186-residue protein sequence, read N- to C-terminus: Low amplitude and bright protein LabA (186 aa).

Functionally, functions in an output pathway of the circadian clock. One of three clock output pathways. Involved in negative feedback regulation of KaiC; deletion leads to overexpression of KaiC protein and decreases the amplitude of the circadian response. Overexpression reduces the expression of circadian genes. This Synechococcus elongatus (strain ATCC 33912 / PCC 7942 / FACHB-805) (Anacystis nidulans R2) protein is Low amplitude and bright protein LabA.